Consider the following 396-residue polypeptide: Elongation factor Tu (396 aa).

A tr-type G domain is found at 10 to 205 (KSHANIGTIG…AVDEYIPTPE (196 aa)). The interval 19–26 (GHVDHGKT) is G1. 19-26 (GHVDHGKT) contacts GTP. Threonine 26 lines the Mg(2+) pocket. Residues 61–65 (GITIS) form a G2 region. The G3 stretch occupies residues 82-85 (DCPG). GTP contacts are provided by residues 82 to 86 (DCPGH) and 137 to 140 (NKCD). Residues 137-140 (NKCD) are G4. A G5 region spans residues 175 to 177 (SAL).

The protein belongs to the TRAFAC class translation factor GTPase superfamily. Classic translation factor GTPase family. EF-Tu/EF-1A subfamily. Monomer.

The protein resides in the cytoplasm. It catalyses the reaction GTP + H2O = GDP + phosphate + H(+). Functionally, GTP hydrolase that promotes the GTP-dependent binding of aminoacyl-tRNA to the A-site of ribosomes during protein biosynthesis. This chain is Elongation factor Tu, found in Bacillus licheniformis (strain ATCC 14580 / DSM 13 / JCM 2505 / CCUG 7422 / NBRC 12200 / NCIMB 9375 / NCTC 10341 / NRRL NRS-1264 / Gibson 46).